The primary structure comprises 57 residues: MLGWVVTFLVIALIAGILGFGGIAGASIEIAKIIFFIAVVLFLVSAVVGLARGRTRI.

2 helical membrane passes run 4–24 (WVVTFLVIALIAGILGFGGIA) and 30–50 (IAKIIFFIAVVLFLVSAVVGL).

It belongs to the UPF0391 family.

It is found in the cell membrane. The protein is UPF0391 membrane protein bsl6560 of Bradyrhizobium diazoefficiens (strain JCM 10833 / BCRC 13528 / IAM 13628 / NBRC 14792 / USDA 110).